The primary structure comprises 735 residues: Nuclear intron maturase 2, mitochondrial (735 aa).

The transit peptide at 1–12 (MRRSFSVLGPYK) directs the protein to the mitochondrion. The Reverse transcriptase domain maps to 161 to 460 (RDKTDYESLS…KGIMFLDHVL (300 aa)). Residues 485–653 (GTLLSVTASL…KFLIEYLTLD (169 aa)) form an intron maturase type-2 region. Residues 707–735 (SSTYNRDNDDQKNKEEDEDSEDGLRIARM) are disordered. Basic and acidic residues predominate over residues 712-721 (RDNDDQKNKE).

It belongs to the plant nuclear intron maturase (nMat) family. In terms of assembly, associated to a large ribonucleoprotein complex in mitochondria containing group-II intron RNAs.

The protein resides in the mitochondrion. In terms of biological role, nuclear-encoded maturase required for splicing of group-II introns in mitochondria. Involved in the splicing of mitochondrial COX2, NAD1 and NAD7 transcripts. Necessary for mitochondrial biogenesis during early developmental stages. The polypeptide is Nuclear intron maturase 2, mitochondrial (Arabidopsis thaliana (Mouse-ear cress)).